The chain runs to 186 residues: ATP synthase subunit b' (186 aa).

Residues 39-59 traverse the membrane as a helical segment; the sequence is IFWLLLALGAIYWLLKNIAIP.

The protein belongs to the ATPase B chain family. As to quaternary structure, F-type ATPases have 2 components, F(1) - the catalytic core - and F(0) - the membrane proton channel. F(1) has five subunits: alpha(3), beta(3), gamma(1), delta(1), epsilon(1). F(0) has four main subunits: a(1), b(1), b'(1) and c(10-14). The alpha and beta chains form an alternating ring which encloses part of the gamma chain. F(1) is attached to F(0) by a central stalk formed by the gamma and epsilon chains, while a peripheral stalk is formed by the delta, b and b' chains.

The protein resides in the cellular chromatophore membrane. In terms of biological role, f(1)F(0) ATP synthase produces ATP from ADP in the presence of a proton or sodium gradient. F-type ATPases consist of two structural domains, F(1) containing the extramembraneous catalytic core and F(0) containing the membrane proton channel, linked together by a central stalk and a peripheral stalk. During catalysis, ATP synthesis in the catalytic domain of F(1) is coupled via a rotary mechanism of the central stalk subunits to proton translocation. Functionally, component of the F(0) channel, it forms part of the peripheral stalk, linking F(1) to F(0). The b'-subunit is a diverged and duplicated form of b found in plants and photosynthetic bacteria. This is ATP synthase subunit b' from Rhodobacter capsulatus (Rhodopseudomonas capsulata).